The sequence spans 105 residues: Met repressor (105 aa).

Belongs to the MetJ family. In terms of assembly, homodimer.

The protein resides in the cytoplasm. Functionally, this regulatory protein, when combined with SAM (S-adenosylmethionine) represses the expression of the methionine regulon and of enzymes involved in SAM synthesis. The polypeptide is Met repressor (Proteus mirabilis (strain HI4320)).